A 434-amino-acid chain; its full sequence is Glucose-1-phosphate adenylyltransferase (434 aa).

Residues Y112, G178, 193–194, and S211 contribute to the alpha-D-glucose 1-phosphate site; that span reads EK.

Belongs to the bacterial/plant glucose-1-phosphate adenylyltransferase family. In terms of assembly, homotetramer.

The enzyme catalyses alpha-D-glucose 1-phosphate + ATP + H(+) = ADP-alpha-D-glucose + diphosphate. It participates in glycan biosynthesis; glycogen biosynthesis. Functionally, involved in the biosynthesis of ADP-glucose, a building block required for the elongation reactions to produce glycogen. Catalyzes the reaction between ATP and alpha-D-glucose 1-phosphate (G1P) to produce pyrophosphate and ADP-Glc. This chain is Glucose-1-phosphate adenylyltransferase, found in Mannheimia succiniciproducens (strain KCTC 0769BP / MBEL55E).